Reading from the N-terminus, the 65-residue chain is Large ribosomal subunit protein bL35 (65 aa).

2 stretches are compositionally biased toward basic residues: residues 1–15 (MPKM…KRFT) and 26–44 (QAFK…KRQL). The disordered stretch occupies residues 1–65 (MPKMKTKKSA…KSVRAMMPYA (65 aa)).

This sequence belongs to the bacterial ribosomal protein bL35 family.

The protein is Large ribosomal subunit protein bL35 of Cupriavidus metallidurans (strain ATCC 43123 / DSM 2839 / NBRC 102507 / CH34) (Ralstonia metallidurans).